We begin with the raw amino-acid sequence, 199 residues long: Probable GTP-binding protein EngB (199 aa).

The EngB-type G domain maps to 28–199 (DLPEIALAGR…DSWDAILEQV (172 aa)). GTP contacts are provided by residues 36-43 (GRSNVGKS), 63-67 (GKTQL), 81-84 (DVPG), 148-151 (TKAD), and 180-182 (FSS). Positions 43 and 65 each coordinate Mg(2+).

Belongs to the TRAFAC class TrmE-Era-EngA-EngB-Septin-like GTPase superfamily. EngB GTPase family. Mg(2+) is required as a cofactor.

Functionally, necessary for normal cell division and for the maintenance of normal septation. This is Probable GTP-binding protein EngB from Streptococcus pyogenes serotype M28 (strain MGAS6180).